A 227-amino-acid polypeptide reads, in one-letter code: Octanoyltransferase (227 aa).

Residues 47 to 223 (EDTADEIWLL…HLLRLLPPGV (177 aa)) enclose the BPL/LPL catalytic domain. Residues 87-94 (RGGQITYH), 154-156 (ALG), and 167-169 (GLA) each bind substrate. Cys185 functions as the Acyl-thioester intermediate in the catalytic mechanism.

It belongs to the LipB family.

Its subcellular location is the cytoplasm. It carries out the reaction octanoyl-[ACP] + L-lysyl-[protein] = N(6)-octanoyl-L-lysyl-[protein] + holo-[ACP] + H(+). It functions in the pathway protein modification; protein lipoylation via endogenous pathway; protein N(6)-(lipoyl)lysine from octanoyl-[acyl-carrier-protein]: step 1/2. Its function is as follows. Catalyzes the transfer of endogenously produced octanoic acid from octanoyl-acyl-carrier-protein onto the lipoyl domains of lipoate-dependent enzymes. Lipoyl-ACP can also act as a substrate although octanoyl-ACP is likely to be the physiological substrate. The sequence is that of Octanoyltransferase from Azoarcus sp. (strain BH72).